Reading from the N-terminus, the 1158-residue chain is ATP-dependent helicase/deoxyribonuclease subunit B (1158 aa).

Positions 1–275 (MTLHAYLGRA…QYFNQLYRFN (275 aa)) constitute a UvrD-like helicase ATP-binding domain. An ATP-binding site is contributed by 8–15 (GRAGTGKS). The UvrD-like helicase C-terminal domain occupies 269–583 (NQLYRFNNQD…SIGTMDLAKV (315 aa)). Positions 784, 1112, 1115, and 1121 each coordinate [4Fe-4S] cluster.

It belongs to the helicase family. AddB/RexB type 1 subfamily. In terms of assembly, heterodimer of AddA and AddB. The cofactor is Mg(2+). [4Fe-4S] cluster serves as cofactor.

In terms of biological role, the heterodimer acts as both an ATP-dependent DNA helicase and an ATP-dependent, dual-direction single-stranded exonuclease. Recognizes the chi site generating a DNA molecule suitable for the initiation of homologous recombination. The AddB subunit has 5' -&gt; 3' nuclease activity but not helicase activity. The polypeptide is ATP-dependent helicase/deoxyribonuclease subunit B (Staphylococcus aureus (strain MSSA476)).